The chain runs to 97 residues: Protein S100-A10 (97 aa).

4 positions are modified to N6-acetyllysine: K23, K28, K54, and K57. The 36-residue stretch at 47-82 (KDPLAVDKIMKDLDQCRDGKVGFQSFLSLVAGLTIA) folds into the EF-hand domain. The ancestral calcium site stretch occupies residues 60 to 71 (DQCRDGKVGFQS).

This sequence belongs to the S-100 family. Heterotetramer containing 2 light chains of S100A10/p11 and 2 heavy chains of ANXA2/p36. Interacts with SCN10A. Interacts with TASOR.

Its function is as follows. Because S100A10 induces the dimerization of ANXA2/p36, it may function as a regulator of protein phosphorylation in that the ANXA2 monomer is the preferred target (in vitro) of tyrosine-specific kinase. The sequence is that of Protein S100-A10 (S100a10) from Mus musculus (Mouse).